The following is a 240-amino-acid chain: NDR1/HIN1-like protein 2 (240 aa).

A helical transmembrane segment spans residues 57–77 (NILIAVAVILGVAALILWLIF). Asparagine 109, asparagine 141, asparagine 151, and asparagine 223 each carry an N-linked (GlcNAc...) asparagine glycan.

As to expression, expressed at low levels in roots, rosette leaves, cauline leaves, stems, flowers and siliques.

It localises to the cell membrane. Functionally, may play a role in plant immunity. This is NDR1/HIN1-like protein 2 from Arabidopsis thaliana (Mouse-ear cress).